The following is a 699-amino-acid chain: Elongation factor G (699 aa).

In terms of domain architecture, tr-type G spans 8–288; that stretch reads EDYRNFGIMA…AVVDYLPSPV (281 aa). GTP-binding positions include 17–24, 86–90, and 140–143; these read AHIDAGKT, DTPGH, and NKMD.

It belongs to the TRAFAC class translation factor GTPase superfamily. Classic translation factor GTPase family. EF-G/EF-2 subfamily.

The protein resides in the cytoplasm. Its function is as follows. Catalyzes the GTP-dependent ribosomal translocation step during translation elongation. During this step, the ribosome changes from the pre-translocational (PRE) to the post-translocational (POST) state as the newly formed A-site-bound peptidyl-tRNA and P-site-bound deacylated tRNA move to the P and E sites, respectively. Catalyzes the coordinated movement of the two tRNA molecules, the mRNA and conformational changes in the ribosome. The polypeptide is Elongation factor G (Sinorhizobium medicae (strain WSM419) (Ensifer medicae)).